Here is a 220-residue protein sequence, read N- to C-terminus: ATP phosphoribosyltransferase (220 aa).

It belongs to the ATP phosphoribosyltransferase family. Short subfamily. In terms of assembly, heteromultimer composed of HisG and HisZ subunits.

Its subcellular location is the cytoplasm. It catalyses the reaction 1-(5-phospho-beta-D-ribosyl)-ATP + diphosphate = 5-phospho-alpha-D-ribose 1-diphosphate + ATP. It functions in the pathway amino-acid biosynthesis; L-histidine biosynthesis; L-histidine from 5-phospho-alpha-D-ribose 1-diphosphate: step 1/9. Its function is as follows. Catalyzes the condensation of ATP and 5-phosphoribose 1-diphosphate to form N'-(5'-phosphoribosyl)-ATP (PR-ATP). Has a crucial role in the pathway because the rate of histidine biosynthesis seems to be controlled primarily by regulation of HisG enzymatic activity. This chain is ATP phosphoribosyltransferase, found in Anaeromyxobacter sp. (strain Fw109-5).